Reading from the N-terminus, the 292-residue chain is NAD kinase (292 aa).

Asp73 functions as the Proton acceptor in the catalytic mechanism. Residues 73–74 (DG), 147–148 (NE), His158, Arg175, Asp177, 188–193 (TAYSLS), and Gln247 each bind NAD(+).

The protein belongs to the NAD kinase family. Requires a divalent metal cation as cofactor.

The protein resides in the cytoplasm. The catalysed reaction is NAD(+) + ATP = ADP + NADP(+) + H(+). In terms of biological role, involved in the regulation of the intracellular balance of NAD and NADP, and is a key enzyme in the biosynthesis of NADP. Catalyzes specifically the phosphorylation on 2'-hydroxyl of the adenosine moiety of NAD to yield NADP. The protein is NAD kinase of Escherichia coli O7:K1 (strain IAI39 / ExPEC).